Reading from the N-terminus, the 439-residue chain is Ornithine aminotransferase, mitochondrial (439 aa).

The N-terminal 35 residues, 1 to 35 (MLSKLASLQTVAALRRGLRTSVASATSVATKKTEQ), are a transit peptide targeting the mitochondrion. N6-acetyllysine occurs at positions 49 and 66. The residue at position 102 (Lys102) is an N6-succinyllysine. The residue at position 107 (Lys107) is an N6-acetyllysine; alternate. Lys107 is subject to N6-succinyllysine; alternate. Residue Lys292 is modified to N6-(pyridoxal phosphate)lysine. At Lys362 the chain carries N6-acetyllysine; alternate. Position 362 is an N6-succinyllysine; alternate (Lys362). Residues Lys386 and Lys392 each carry the N6-acetyllysine modification. Lys405 is subject to N6-acetyllysine; alternate. At Lys405 the chain carries N6-succinyllysine; alternate. Lys421 bears the N6-acetyllysine mark.

As to quaternary structure, homohexamer. Pyridoxal 5'-phosphate is required as a cofactor. Expressed in the head and flagellum of epididymal sperm but not in testicular sperm (at protein level).

Its subcellular location is the mitochondrion matrix. It catalyses the reaction L-ornithine + 2-oxoglutarate = L-glutamate 5-semialdehyde + L-glutamate. The protein operates within amino-acid biosynthesis; L-proline biosynthesis; L-glutamate 5-semialdehyde from L-ornithine: step 1/1. Catalyzes the reversible interconversion of L-ornithine and 2-oxoglutarate to L-glutamate semialdehyde and L-glutamate. In Rattus norvegicus (Rat), this protein is Ornithine aminotransferase, mitochondrial (Oat).